Here is a 58-residue protein sequence, read N- to C-terminus: Small ribosomal subunit protein bS21 (58 aa).

The protein belongs to the bacterial ribosomal protein bS21 family.

The polypeptide is Small ribosomal subunit protein bS21 (Latilactobacillus sakei subsp. sakei (strain 23K) (Lactobacillus sakei subsp. sakei)).